A 177-amino-acid polypeptide reads, in one-letter code: Large ribosomal subunit protein uL6 (177 aa).

Residues 156-171 show a composition bias toward basic and acidic residues; the sequence is PYKGKGVRYDTETIRR. A disordered region spans residues 156–177; the sequence is PYKGKGVRYDTETIRRKEGKKK.

Belongs to the universal ribosomal protein uL6 family. In terms of assembly, part of the 50S ribosomal subunit.

In terms of biological role, this protein binds to the 23S rRNA, and is important in its secondary structure. It is located near the subunit interface in the base of the L7/L12 stalk, and near the tRNA binding site of the peptidyltransferase center. The polypeptide is Large ribosomal subunit protein uL6 (Gluconacetobacter diazotrophicus (strain ATCC 49037 / DSM 5601 / CCUG 37298 / CIP 103539 / LMG 7603 / PAl5)).